The sequence spans 617 residues: Serine/threonine-protein kinase par-4 (617 aa).

Positions 1-11 are enriched in polar residues; that stretch reads MDAPSTSSGAQ. Residues 1 to 59 are disordered; the sequence is MDAPSTSSGAQSKLLMPGDDEADEDHQNRGDPNLQQKQKIQLNVDPDYDDDEDDDCFID. Acidic residues predominate over residues 46 to 57; the sequence is PDYDDDEDDDCF. Residues 183–446 form the Protein kinase domain; that stretch reads YMWGGQIGTG…CLETMIHPWF (264 aa). ATP-binding positions include 189–197 and K212; that span reads IGTGSYGKV. The Proton acceptor role is filled by D310. Positions 523–617 are disordered; the sequence is LEAKPGDGPD…CIFRSRTDSA (95 aa). A compositionally biased stretch (pro residues) spans 587–597; it reads DPPPTAAPGAP.

The protein belongs to the protein kinase superfamily. CAMK Ser/Thr protein kinase family. LKB1 subfamily. Interacts with strd-1. Mg(2+) is required as a cofactor. Requires Mn(2+) as cofactor. As to expression, expressed in the gonads, oocytes and early embryos (at protein level).

It is found in the cytoplasm. Its subcellular location is the cell cortex. The catalysed reaction is L-seryl-[protein] + ATP = O-phospho-L-seryl-[protein] + ADP + H(+). The enzyme catalyses L-threonyl-[protein] + ATP = O-phospho-L-threonyl-[protein] + ADP + H(+). Required for cytoplasmic partitioning and asymmetric cell division in early embryogenesis. Controls the asymmetric cell division of the Q.p neuroblast lineage. Involved in mediating cell polarization via regulation of anillin family scaffold proteins. Phosphorylates and restricts the asymmetry effectors mex-5 and mex-6 to the anterior cytoplasm of the zygote and maintains these phosphorylations until fertilization. May phosphorylate par-1. Required for strd-1 localization to the cell cortex of early embryos and may be required for strd-1 protein stabilization. May regulate the integrity of the early embryonic cortex in a strd-1-dependent manner. Phosphorylates and regulates aak-2 in response to oxidative stress and during dauer development. May also play a role in motility, behavioral response, regulation of lifespan and dauer formation through this pathway. Required to establish germline stem cell (GSC) quiescence during dauer development. Acts downstream of unc-40 in dendrite outgrowth. May play a role in cell shedding during embryogenesis, probably by phosphorylating pig-1. This chain is Serine/threonine-protein kinase par-4 (par-4), found in Caenorhabditis elegans.